We begin with the raw amino-acid sequence, 123 residues long: Fluoride-specific ion channel FluC (123 aa).

A run of 4 helical transmembrane segments spans residues 1-21, 32-52, 66-86, and 94-114; these read MQWL…GWLA, LGTL…LVWF, FVIT…AEVF, and LLAA…ATAL. Na(+)-binding residues include glycine 73 and threonine 76.

Belongs to the fluoride channel Fluc/FEX (TC 1.A.43) family.

The protein localises to the cell inner membrane. The enzyme catalyses fluoride(in) = fluoride(out). Na(+) is not transported, but it plays an essential structural role and its presence is essential for fluoride channel function. Fluoride-specific ion channel. Important for reducing fluoride concentration in the cell, thus reducing its toxicity. This is Fluoride-specific ion channel FluC from Psychrobacter arcticus (strain DSM 17307 / VKM B-2377 / 273-4).